A 231-amino-acid polypeptide reads, in one-letter code: Putative S-adenosylmethionine-dependent methyltransferase RcsF (231 aa).

Residues Val-5 to Asp-142 form the TsaA-like domain. Residues Pro-22 to Gln-24, His-63 to Gln-64, Arg-91, and Leu-122 to Thr-125 each bind S-adenosyl-L-methionine.

The protein belongs to the tRNA methyltransferase O family.

The protein is Putative S-adenosylmethionine-dependent methyltransferase RcsF (rcsF) of Pseudomonas aeruginosa (strain ATCC 15692 / DSM 22644 / CIP 104116 / JCM 14847 / LMG 12228 / 1C / PRS 101 / PAO1).